Consider the following 37-residue polypeptide: NADH dehydrogenase [ubiquinone] 1 alpha subcomplex subunit 5 (37 aa).

Belongs to the complex I NDUFA5 subunit family. In terms of assembly, complex I is composed of about 45 different subunits.

It is found in the mitochondrion inner membrane. Functionally, accessory subunit of the mitochondrial membrane respiratory chain NADH dehydrogenase (Complex I), that is believed not to be involved in catalysis. Complex I functions in the transfer of electrons from NADH to the respiratory chain. The immediate electron acceptor for the enzyme is believed to be ubiquinone. In Solanum tuberosum (Potato), this protein is NADH dehydrogenase [ubiquinone] 1 alpha subcomplex subunit 5.